A 527-amino-acid polypeptide reads, in one-letter code: Mitochondrial substrate carrier family protein V (527 aa).

The segment covering 1–14 (MNSSDFKKSFKEST) has biased composition (basic and acidic residues). The interval 1–29 (MNSSDFKKSFKESTENNSNTYRPSKTLNT) is disordered. Over 1-132 (MNSSDFKKSF…VSKKSISKEN (132 aa)) the chain is Mitochondrial intermembrane. The span at 15–29 (ENNSNTYRPSKTLNT) shows a compositional bias: polar residues. Solcar repeat units follow at residues 130–220 (KENV…CKKH), 253–345 (MTVP…FKII), and 430–519 (VNMI…CKDL). A helical membrane pass occupies residues 133–153 (VNYLVSGSIAGAISRSATAGF). Over 154–187 (ERLTIIQQVQGMSQNLSQGYVGCIAAMKEMVKRE) the chain is Mitochondrial matrix. A helical transmembrane segment spans residues 188–208 (GFKSIWKGNGANIVKVSPNSG). Over 209-258 (IRFLTYEFCKKHFLDNSSNHPSSSSIENGIDGNGVGCGSGSEMKMTVPQT) the chain is Mitochondrial intermembrane. A helical membrane pass occupies residues 259 to 279 (MFSGAMAGLTSTFFTYPLDVV). At 280-324 (RIRLSLQGSCSNDYAAHRYNGITHSFFKIHKDEGVKGLYKGLGTS) the chain is on the mitochondrial matrix side. The helical transmembrane segment at 325–345 (IASIVPWVSISFATYEGFKII) threads the bilayer. Over 346 to 435 (CKKMILNYQI…LKKGVNMICD (90 aa)) the chain is Mitochondrial intermembrane. Residues 436 to 456 (FVCGALSGAVTMTVCYPLDVL) form a helical membrane-spanning segment. The Mitochondrial matrix portion of the chain corresponds to 457–487 (RRRMMIQGIGGNKVLYKNGWDATKKILSNEG). The chain crosses the membrane as a helical span at residues 488–508 (LVAFYHGIIPAYFKVVPTVAI). Topologically, residues 509–527 (SFAVYEICKDLGSNKYQQK) are mitochondrial intermembrane.

Belongs to the mitochondrial carrier (TC 2.A.29) family.

It is found in the mitochondrion inner membrane. Mitochondrial solute carriers shuttle metabolites, nucleotides, and cofactors through the mitochondrial inner membrane. This is Mitochondrial substrate carrier family protein V (mcfV) from Dictyostelium discoideum (Social amoeba).